The chain runs to 118 residues: Eukaryotic translation initiation factor 4E-binding protein 1 (118 aa).

The residue at position 2 (S2) is an N-acetylserine. A disordered region spans residues 27–48; the sequence is VQLPPGDYSTTPGGTLFSTTPG. The segment covering 34–48 has biased composition (polar residues); that stretch reads YSTTPGGTLFSTTPG. T37 is modified (phosphothreonine; by MTOR). T41 carries the phosphothreonine modification. Phosphoserine is present on S44. T46 is subject to Phosphothreonine; by MTOR. At T50 the chain carries Phosphothreonine. Y54 is modified (phosphotyrosine). The YXXXXLphi motif signature appears at 54–60; the sequence is YDRKFLM. K57 participates in a covalent cross-link: Glycyl lysine isopeptide (Lys-Gly) (interchain with G-Cter in ubiquitin). The disordered stretch occupies residues 64–118; that stretch reads NSPVTKTPPRDLPTIPGVTSPTGDEPPTEARQNHLRSSPEDKPAGGEESQFEMDI. Residue S65 is modified to Phosphoserine; by DYRK2, MAPK1, MAPK3 and MTOR. T70 carries the phosphothreonine; by MTOR modification. Phosphothreonine is present on T77. A phosphoserine mark is found at S83 and S100. S101 bears the Phosphoserine; by DYRK2 mark. At S112 the chain carries Phosphoserine. The short motif at 114–118 is the TOS motif element; the sequence is FEMDI.

This sequence belongs to the eIF4E-binding protein family. As to quaternary structure, hypophosphorylated EIF4EBP1 competes with EIF4G1/EIF4G3 to interact with EIF4E; insulin stimulated MAP-kinase (MAPK1 and MAPK3) or mTORC1 phosphorylation of EIF4EBP1 causes dissociation of the complex allowing EIF4G1/EIF4G3 to bind and consequent initiation of translation. Interacts (via TOS motif) with RPTOR; promoting phosphorylation by mTORC1. Phosphorylated on serine and threonine residues in response to insulin, EGF and PDGF. Phosphorylation at Thr-37, Thr-46, Ser-65 and Thr-70, corresponding to the hyperphosphorylated form, is regulated by mTORC1 and abolishes binding to EIF4E. In terms of processing, ubiquitinated: when eIF4E levels are low, hypophosphorylated form is ubiquitinated by the BCR(KLHL25) complex, leading to its degradation and serving as a homeostatic mechanism to maintain translation and prevent eIF4E inhibition when eIF4E levels are low. Not ubiquitinated when hyperphosphorylated (at Thr-37, Thr-46, Ser-65 and Thr-70) or associated with eIF4E.

Its subcellular location is the cytoplasm. The protein localises to the nucleus. In terms of biological role, repressor of translation initiation that regulates EIF4E activity by preventing its assembly into the eIF4F complex: hypophosphorylated form competes with EIF4G1/EIF4G3 and strongly binds to EIF4E, leading to repress translation. In contrast, hyperphosphorylated form dissociates from EIF4E, allowing interaction between EIF4G1/EIF4G3 and EIF4E, leading to initiation of translation. Mediates the regulation of protein translation by hormones, growth factors and other stimuli that signal through the MAP kinase and mTORC1 pathways. This is Eukaryotic translation initiation factor 4E-binding protein 1 (EIF4EBP1) from Bos taurus (Bovine).